Reading from the N-terminus, the 158-residue chain is SUMO-conjugating enzyme UBC9 (158 aa).

A UBC core domain is found at 4–157; sequence IALSRLAQER…VRAQAKKFAP (154 aa). Residues 13–18 are interaction with SUMO1; sequence RKAWRK. The active-site Glycyl thioester intermediate is the Cys-93.

Belongs to the ubiquitin-conjugating enzyme family. As to quaternary structure, interacts with SOX9.

The protein localises to the nucleus. It is found in the cytoplasm. It participates in protein modification; protein sumoylation. Accepts the ubiquitin-like proteins SUMO1, SUMO2 and SUMO3 from the UBLE1A-UBLE1B E1 complex and catalyzes their covalent attachment to other proteins with the help of an E3 ligase such as RANBP2 or CBX4. Essential for nuclear architecture and chromosome segregation. This Gallus gallus (Chicken) protein is SUMO-conjugating enzyme UBC9 (UBE2I).